Reading from the N-terminus, the 951-residue chain is Valine--tRNA ligase (951 aa).

The short motif at Pro42–His52 is the 'HIGH' region element. The short motif at Lys554–Ser558 is the 'KMSKS' region element. Residue Lys557 participates in ATP binding. Residues Ala880 to Gln944 adopt a coiled-coil conformation.

The protein belongs to the class-I aminoacyl-tRNA synthetase family. ValS type 1 subfamily. As to quaternary structure, monomer.

The protein localises to the cytoplasm. The enzyme catalyses tRNA(Val) + L-valine + ATP = L-valyl-tRNA(Val) + AMP + diphosphate. Catalyzes the attachment of valine to tRNA(Val). As ValRS can inadvertently accommodate and process structurally similar amino acids such as threonine, to avoid such errors, it has a 'posttransfer' editing activity that hydrolyzes mischarged Thr-tRNA(Val) in a tRNA-dependent manner. This Escherichia coli (strain K12) protein is Valine--tRNA ligase (valS).